A 546-amino-acid polypeptide reads, in one-letter code: Chaperonin GroEL (546 aa).

ATP is bound by residues 29–32 (TMGP), Lys50, 86–90 (DGTTT), Gly414, and Asp492.

It belongs to the chaperonin (HSP60) family. As to quaternary structure, forms a cylinder of 14 subunits composed of two heptameric rings stacked back-to-back. Interacts with the co-chaperonin GroES.

It localises to the cytoplasm. The enzyme catalyses ATP + H2O + a folded polypeptide = ADP + phosphate + an unfolded polypeptide.. Functionally, together with its co-chaperonin GroES, plays an essential role in assisting protein folding. The GroEL-GroES system forms a nano-cage that allows encapsulation of the non-native substrate proteins and provides a physical environment optimized to promote and accelerate protein folding. In Helicobacter pylori (strain ATCC 700392 / 26695) (Campylobacter pylori), this protein is Chaperonin GroEL.